The following is a 165-amino-acid chain: Sporulation thiol-disulfide oxidoreductase A (165 aa).

The first 26 residues, 1–26 (MLTKRLLTIYIMLLGLIAWFPGAAQA), serve as a signal peptide directing secretion. Residues 27 to 165 (EEKQPAVPAV…AEQLKEWTEE (139 aa)) form the Thioredoxin domain. A disulfide bridge connects residues cysteine 65 and cysteine 68.

The protein belongs to the thioredoxin family.

The protein resides in the spore outer membrane. Functionally, thiol-disulfide oxidoreductase with a reductive function, involved in spore cortex synthesis. It could be involved either in breaking disulfide bonds in cortex components or in proteins that are important for cortex synthesis, or in thiol/disulfide bond interchange. This Bacillus subtilis (strain 168) protein is Sporulation thiol-disulfide oxidoreductase A (stoA).